Consider the following 965-residue polypeptide: Receptor-like protein 15 (965 aa).

The N-terminal stretch at 1 to 23 (MEGKVFLGHNLIWVMLLMGQLHG) is a signal peptide. Residues 24–916 (YKSCIDEEKI…GVEADESIID (893 aa)) are Extracellular-facing. N-linked (GlcNAc...) asparagine glycans are attached at residues Asn-57, Asn-95, Asn-109, and Asn-145. 17 LRR repeats span residues 80-102 (EISF…LHPF), 103-127 (EDVR…GYKS), 131-154 (LRKL…FLSA), 156-179 (TSLT…ELRD), 180-204 (LTNL…ELSS), 206-230 (RKLK…KFCT), 243-267 (LNNM…LTSL), 268-290 (TGLR…SLGS), 292-315 (QSLE…SLAN), 316-341 (LSNL…SWKP), 342-365 (KFQL…LLHQ), 366-389 (KDLR…LLAN), 391-415 (TKLK…AHNL), 417-435 (FLDV…NIGW), 437-461 (FPHL…LGNM), 462-485 (NGIQ…FVNG), and 487-512 (YSMA…NFTN). Asn-194 is a glycosylation site (N-linked (GlcNAc...) asparagine). N-linked (GlcNAc...) asparagine glycosylation is present at Asn-315. Residues Asn-377 and Asn-389 are each glycosylated (N-linked (GlcNAc...) asparagine). Residue Asn-444 is glycosylated (N-linked (GlcNAc...) asparagine). Asn-509 carries N-linked (GlcNAc...) asparagine glycosylation. The LRR 18; degenerate repeat unit spans residues 514–533 (LGLFMDNNLFTGKIGQGLRS). LRR repeat units follow at residues 534-557 (LINL…WIGE), 558-582 (LPSL…LFNK), 584-606 (SLQL…HDSR), 608-627 (GVVL…DTLL), 628-652 (ANVE…NIQN), 654-674 (SILL…LCGL), 675-698 (SNIQ…LSNT), 778-801 (LKLL…EFGG), 802-825 (LLEL…SISS), 827-850 (EKME…LTEL), and 851-875 (TSLS…QFNT). N-linked (GlcNAc...) asparagine glycans are attached at residues Asn-546 and Asn-581. Residues Asn-652, Asn-662, Asn-688, and Asn-697 are each glycosylated (N-linked (GlcNAc...) asparagine). N-linked (GlcNAc...) asparagine glycosylation is found at Asn-809 and Asn-814. N-linked (GlcNAc...) asparagine glycosylation is found at Asn-862, Asn-893, and Asn-898. The helical transmembrane segment at 917 to 937 (MVSFYLSFAAAYVTILIGILA) threads the bilayer. The Cytoplasmic portion of the chain corresponds to 938-965 (SLSFDSPWSRFWFYKVDAFIKKVRNLLL).

The protein belongs to the RLP family.

It localises to the cell membrane. The polypeptide is Receptor-like protein 15 (Arabidopsis thaliana (Mouse-ear cress)).